A 1030-amino-acid polypeptide reads, in one-letter code: Protein phosphatase 1 regulatory subunit 12A (1030 aa).

Residues 35–38 (KVKF) carry the KVKF motif motif. ANK repeat units follow at residues 39–68 (DDGA…DINY), 72–101 (DGLT…NINQ), 105–134 (EGWI…HVGA), 138–164 (EGDT…RQGV), 198–227 (SGGT…DVNI), and 231–260 (DGWT…DMEM). 2 positions are modified to (3S)-3-hydroxyasparagine; by HIF1AN; partial: Asn67 and Asn100. Asn226 carries the (3S)-3-hydroxyasparagine; by HIF1AN; partial modification. 2 disordered regions span residues 290–628 (LHSE…SVPT) and 643–928 (ASTT…EKDD). Over residues 291-300 (HSEKRDKKSP) the composition is skewed to basic and acidic residues. Phosphoserine is present on Ser299. A compositionally biased stretch (polar residues) spans 302-316 (IESTANMDNNQSQKT). Basic and acidic residues predominate over residues 318-340 (KNKETLIIEPEKNASRIESLEQE). Acidic residues predominate over residues 357–369 (SEEDEEDDSESEA). Residues 385–402 (TSSTQAAPVAVTTPTVSS) show a composition bias toward low complexity. A phosphoserine mark is found at Ser422 and Ser432. The segment covering 422–432 (SPKEEERKDES) has biased composition (basic and acidic residues). Residue Thr443 is modified to Phosphothreonine. Position 445 is a phosphoserine; by NUAK1 (Ser445). At Tyr446 the chain carries Phosphotyrosine. The span at 469–480 (RSASSPRLSSSL) shows a compositional bias: low complexity. Residue Ser472 is modified to Phosphoserine; by NUAK1. Ser473 carries the phosphoserine; by CDK1 modification. The residue at position 477 (Ser477) is a Phosphoserine. Residues 481–491 (DNKEKEKDSKG) are compositionally biased toward basic and acidic residues. Residues Ser507 and Ser509 each carry the phosphoserine modification. Over residues 540-551 (NSSVNEGSTYHK) the composition is skewed to polar residues. Over residues 564-610 (SSSVPSTTSTPTVTSAAGLQKSLLSSTSTTTKITTGSSSAGTQSSTS) the composition is skewed to low complexity. Phosphoserine is present on residues Ser601 and Ser618. Residues 614–625 (WAEDSTEKEKDS) are compositionally biased toward basic and acidic residues. Residues 643–660 (ASTTTLTTTTAGTVSSTT) show a composition bias toward low complexity. Over residues 673-682 (VRDEESESQR) the composition is skewed to basic and acidic residues. Positions 682–864 (RKARSRQARQ…VSFWTQDSDE (183 aa)) are interaction with ROCK2. A compositionally biased stretch (basic residues) spans 683–693 (KARSRQARQSR). Phosphoserine; by PKA and PKG; in vitro occurs at positions 692 and 695. The residue at position 696 (Thr696) is a Phosphothreonine; by ROCK1, ROCK2, CDC42BP, ZIPK/DAPK3 and RAF1. The segment covering 718-767 (RTREQENEEKEKEEKEKQDKEKQEEKKESETSREDEYKQKYSRTYDETYQ) has biased composition (basic and acidic residues). Positions 773-795 (STSSSTTPSSSLSTMSSSLYASS) are enriched in low complexity. Over residues 796-810 (QLNRPNSLVGITSAY) the composition is skewed to polar residues. Residue Ser802 is modified to Phosphoserine. Residues 814–840 (ITKENEREGEKREEEKEGEDKSQPKSI) are compositionally biased toward basic and acidic residues. A compositionally biased stretch (basic residues) spans 841–852 (RERRRPREKRRS). Residue Ser852 is modified to Phosphoserine; by ROCK2. The span at 861 to 875 (DSDENEQEQQSDTEE) shows a compositional bias: acidic residues. Phosphoserine is present on residues Ser862 and Ser871. The span at 884-897 (TDSISRYETSSTSA) shows a compositional bias: polar residues. Ser903 and Ser908 each carry phosphoserine. Residues 903–913 (SLLGRSGSYSY) show a composition bias toward low complexity. A Phosphoserine; by NUAK1 modification is found at Ser910. Over residues 914–928 (LEERKPYSSRLEKDD) the composition is skewed to basic and acidic residues. A Phosphoserine modification is found at Ser995.

In terms of assembly, PP1 comprises a catalytic subunit, PPP1CA, PPP1CB or PPP1CC, and one or several targeting or regulatory subunits. PPP1R12A mediates binding to myosin. Interacts with ARHA and CIT. Binds PPP1R12B, ROCK1 and IL16. Interacts directly with PRKG1. Non-covalent dimer of 2 dimers; PRKG1-PRKG1 and PPP1R12A-PPP1R12A. Interacts with SMTNL1. Interacts with PPP1CB; the interaction is direct. Interacts (when phosphorylated at Ser-445, Ser-472 and Ser-910) with 14-3-3. Interacts with ROCK1 and ROCK2. Interacts with isoform 1 and isoform 2 of ZIPK/DAPK3. Interacts with RAF1. Interacts with HIF1AN. Interacts with NCKAP1L. In terms of processing, phosphorylated by CIT (Rho-associated kinase). Phosphorylated cooperatively by ROCK1 and CDC42BP on Thr-696. Phosphorylated on upon DNA damage, probably by ATM or ATR. In vitro, phosphorylation of Ser-695 by PKA and PKG appears to prevent phosphorylation of the inhibitory site Thr-696, probably mediated by PRKG1. Phosphorylation at Ser-445, Ser-472 and Ser-910 by NUAK1 promotes interaction with 14-3-3, leading to inhibit interaction with myosin light chain MLC2, preventing dephosphorylation of MLC2. May be phosphorylated at Thr-696 by DMPK; may inhibit the myosin phosphatase activity. Phosphorylated at Ser-473 by CDK1 during mitosis, creating docking sites for the POLO box domains of PLK1. Subsequently, PLK1 binds and phosphorylates PPP1R12A. Expressed in striated muscles, specifically in type 2a fibers (at protein level).

It is found in the cytoplasm. It localises to the cytoskeleton. The protein localises to the stress fiber. In terms of biological role, key regulator of protein phosphatase 1C (PPP1C). Mediates binding to myosin. As part of the PPP1C complex, involved in dephosphorylation of PLK1. Capable of inhibiting HIF1AN-dependent suppression of HIF1A activity. This Homo sapiens (Human) protein is Protein phosphatase 1 regulatory subunit 12A.